A 90-amino-acid polypeptide reads, in one-letter code: Acylphosphatase (90 aa).

One can recognise an Acylphosphatase-like domain in the interval 3 to 90 (AIEVDVFGLV…FETNDFAIRG (88 aa)). Catalysis depends on residues Arg-18 and Asn-36.

This sequence belongs to the acylphosphatase family.

The enzyme catalyses an acyl phosphate + H2O = a carboxylate + phosphate + H(+). The sequence is that of Acylphosphatase (acyP) from Leuconostoc mesenteroides subsp. mesenteroides (strain ATCC 8293 / DSM 20343 / BCRC 11652 / CCM 1803 / JCM 6124 / NCDO 523 / NBRC 100496 / NCIMB 8023 / NCTC 12954 / NRRL B-1118 / 37Y).